We begin with the raw amino-acid sequence, 367 residues long: Uroporphyrinogen decarboxylase (367 aa).

Substrate contacts are provided by residues 27–31 (RQAGR), Asp-77, Tyr-157, Thr-212, and His-333.

This sequence belongs to the uroporphyrinogen decarboxylase family. In terms of assembly, homodimer.

The protein localises to the cytoplasm. The enzyme catalyses uroporphyrinogen III + 4 H(+) = coproporphyrinogen III + 4 CO2. The protein operates within porphyrin-containing compound metabolism; protoporphyrin-IX biosynthesis; coproporphyrinogen-III from 5-aminolevulinate: step 4/4. In terms of biological role, catalyzes the decarboxylation of four acetate groups of uroporphyrinogen-III to yield coproporphyrinogen-III. The polypeptide is Uroporphyrinogen decarboxylase (Cupriavidus metallidurans (strain ATCC 43123 / DSM 2839 / NBRC 102507 / CH34) (Ralstonia metallidurans)).